The chain runs to 803 residues: Nuclear factor of activated T-cells, cytoplasmic 1 (803 aa).

Positions 101–106 (PRIEIT) are calcineurin-binding. The interval 109–199 (LGLHHNSSQF…CVSPKTTDPE (91 aa)) is transactivation domain A (TAD-A). The segment covering 181 to 195 (PQTSPWQSPCVSPKT) has biased composition (polar residues). The segment at 181–279 (PQTSPWQSPC…GSPRVSVTDD (99 aa)) is disordered. 2 repeat units span residues 184-200 (SPWQ…DPEE) and 214-230 (SPRH…VTEE). The interval 184-279 (SPWQSPCVSP…GSPRVSVTDD (96 aa)) is 3 X SP repeats. Phosphoserine is present on residues Ser-214 and Ser-218. Low complexity predominate over residues 214 to 231 (SPRHSPSTSPRTSVTEES). Ser-226 carries the phosphoserine; by PKA modification. Residues 246 to 248 (KRK) carry the Nuclear localization signal motif. Repeat 3 spans residues 263–279 (SPTPSPQGSPRVSVTDD). The residue at position 275 (Ser-275) is a Phosphoserine; by PKA. The Nuclear export signal signature appears at 291 to 302 (SAIVAAINALST). Residues 389–571 (PSLPALDWQL…NPIECSQRSA (183 aa)) form the RHD domain. The DNA-binding element occupies 418-425 (RAHYETEG). Residues 661–663 (KRK) carry the Nuclear localization signal motif. A disordered region spans residues 723 to 803 (LMPGFPPRPQ…QPQVSPTSSG (81 aa)). Over residues 778-792 (SGVPPGPPQPPPPTL) the composition is skewed to pro residues. Low complexity predominate over residues 793-803 (LQPQVSPTSSG).

Member of the multicomponent NFATC transcription complex that consists of at least two components, a pre-existing cytoplasmic component NFATC2 and an inducible nuclear component NFATC1. Other members such as NFATC4, NFATC3 or members of the activating protein-1 family, MAF, GATA4 and Cbp/p300 can also bind the complex. NFATC proteins bind to DNA as monomers. Interacts with HOMER2 and HOMER3; this interaction may compete with calcineurin/PPP3CA-binding and hence prevent NFATC1 dephosphorylation and activation. Interacts with TLE6/GRG6. In terms of processing, phosphorylated by NFATC-kinase and GSK3B; phosphorylation induces NFATC1 nuclear exit and dephosphorylation by calcineurin promotes nuclear import. Phosphorylation by PKA and DYRK2 negatively modulates nuclear accumulation, and promotes subsequent phosphorylation by GSK3B or casein kinase 1.

The protein localises to the cytoplasm. The protein resides in the nucleus. Its function is as follows. Plays a role in the inducible expression of cytokine genes in T-cells, especially in the induction of the IL-2 or IL-4 gene transcription. Also controls gene expression in embryonic cardiac cells. Could regulate not only the activation and proliferation but also the differentiation and programmed death of T-lymphocytes as well as lymphoid and non-lymphoid cells. Required for osteoclastogenesis and regulates many genes important for osteoclast differentiation and function. The chain is Nuclear factor of activated T-cells, cytoplasmic 1 from Bos taurus (Bovine).